The primary structure comprises 808 residues: Aminotransferase ALT4 (808 aa).

It belongs to the class-II pyridoxal-phosphate-dependent aminotransferase family. BioF subfamily. Pyridoxal 5'-phosphate is required as a cofactor.

The protein operates within mycotoxin biosynthesis. In terms of biological role, aminotransferase; part of the gene cluster that mediates the biosynthesis of the host-selective toxins (HSTs) AAL-toxins, sphinganine-analog mycotoxins responsible for Alternaria stem canker on tomato by the tomato pathotype. The biosynthesis starts with the polyketide synthase ALT1-catalyzed C-16 carbon chain assembly from one starter acetyl-CoA unit with malonyl-CoA extender units. ALT1 also selectively transfers methyl groups at the first and the third cycle of chain elongation for AAL toxin. The C-16 polyketide chain is released from the enzyme by a nucleophilic attack of a carbanion, which is derived from R-carbon of glycin by decarboxylation, on the carbonyl carbon of polyketide acyl chain. This step is probably catalyzed by a pyridoxal 5'-phosphate-dependent aminoacyl transferase ALT4. The respective functions of the other enzymes encoded by the cluster have still to be elucidated. The sphingosine N-acyltransferase-like protein ALT7 seems not to act as a resistance/self-tolerance factor against the toxin in the toxin biosynthetic gene cluster, contrary to what is expected. The protein is Aminotransferase ALT4 of Alternaria alternata (Alternaria rot fungus).